The primary structure comprises 241 residues: Uridylate kinase (241 aa).

Lys15–Gly18 contacts ATP. Residues Gly23–Gly28 form an involved in allosteric activation by GTP region. Gly57 is a binding site for UMP. The ATP site is built by Gly58 and Arg62. UMP-binding positions include Asp77 and Thr138–Thr145. ATP is bound by residues Thr165, Tyr171, and Asp174.

The protein belongs to the UMP kinase family. As to quaternary structure, homohexamer.

The protein localises to the cytoplasm. The catalysed reaction is UMP + ATP = UDP + ADP. Its pathway is pyrimidine metabolism; CTP biosynthesis via de novo pathway; UDP from UMP (UMPK route): step 1/1. Allosterically activated by GTP. Inhibited by UTP. In terms of biological role, catalyzes the reversible phosphorylation of UMP to UDP. The protein is Uridylate kinase of Shewanella amazonensis (strain ATCC BAA-1098 / SB2B).